Consider the following 197-residue polypeptide: Putative early 21.8 kDa protein (197 aa).

Its function is as follows. This protein is required for viral late gene expression. This chain is Putative early 21.8 kDa protein (DA26), found in Orgyia pseudotsugata (Douglas-fir tussock moth).